A 231-amino-acid chain; its full sequence is Ubiquinone biosynthesis protein coq-4, mitochondrial (231 aa).

Zn(2+) is bound by residues His-133, Asp-134, His-137, and Glu-149.

The protein belongs to the COQ4 family. In terms of assembly, component of a multi-subunit COQ enzyme complex. Requires Zn(2+) as cofactor.

The protein localises to the mitochondrion inner membrane. The catalysed reaction is a 4-hydroxy-3-methoxy-5-(all-trans-polyprenyl)benzoate + H(+) = a 2-methoxy-6-(all-trans-polyprenyl)phenol + CO2. It functions in the pathway cofactor biosynthesis; ubiquinone biosynthesis. Its function is as follows. Lyase that catalyzes the C1-decarboxylation of 4-hydroxy-3-methoxy-5-(all-trans-polyprenyl)benzoic acid into 2-methoxy-6-(all-trans-polyprenyl)phenol during ubiquinone biosynthesis. In Caenorhabditis elegans, this protein is Ubiquinone biosynthesis protein coq-4, mitochondrial.